Here is a 384-residue protein sequence, read N- to C-terminus: MTLPELPKDLVEEILSFVPATSLKRLRSTCKGWNRLFKDDKRFTRIHTEKAAKQFQPLTLTKNYRICPINVNLHGTTPSLEVKNEVSLLDPHSKNSAAQFNIDRVFHCDGLLLCTSQKDSRFVVWNPLTGVTKWIELGDRYNEGMAFILGYDNKSCNKSYKAMSFNYLDKDSEIYEFSSDSWRVIDDIIKPPHYMDYFRECFSLKGNTYWLGIDRRRRPPDLRITLIKFDFGTEKFGYVSLPPPCQVHGFEASNLSVVGDEKLSVLVQAGSTSKTEVWVTSKIGEANVVSWSKVLSLYPKPDVGFWHGLSFLLDEEKKVFLCCKSKGWMEEEDEDNVYIVGEDNKFILLNFGVETIGGESPIITTYVPSLVQIELAGSKRKTDY.

Residues 1–46 form the F-box domain; sequence MTLPELPKDLVEEILSFVPATSLKRLRSTCKGWNRLFKDDKRFTRI.

This is F-box protein At2g07140 from Arabidopsis thaliana (Mouse-ear cress).